The primary structure comprises 381 residues: E3 ubiquitin-protein ligase RNF34 (381 aa).

An FYVE-type zinc finger spans residues 56–107 (EGPNIVCKACGLSFSVFRKKHVCCDCKKDFCSLCSVSQENLRRCSTCHLLQE). Positions 115-134 (LMRLKVKDLRQYLLLRNVPT) constitute an SAP 1 domain. Residue Ser169 is modified to Phosphoserine. Residues 216-261 (LASANTDDEDGEEDDDDDDDDDDEDDDEQEENLEEQNPGLSKKKAR) are disordered. Residues 221–249 (TDDEDGEEDDDDDDDDDDEDDDEQEENLE) show a composition bias toward acidic residues. Ser263 and Ser265 each carry phosphoserine. The region spanning 273 to 287 (VEGMSVRQLKEILAR) is the SAP 2 domain. An RING-type zinc finger spans residues 334-369 (CRICMDAVIDCVLLECGHMVTCTKCGKRMSECPICR).

Interacts with CASP8 and CASP10. Interacts with p53/TP53; involved in p53/TP53 ubiquitination. Interacts (via RING-type zinc finger) with MDM2; the interaction stabilizes MDM2. Interacts (via RING-type zinc finger) with PPARGC1A. Interacts with NOD1. Proteolytically cleaved by caspases upon induction of apoptosis by TNF. In terms of processing, autoubiquitinated (in vitro). As to expression, ubiquitous. Detected in brain, cerebellum, midbrain, hippocampus, striatum, heart, lung, kidney, muscle, spleen and testis.

The protein localises to the cell membrane. It localises to the endomembrane system. The protein resides in the nucleus. Its subcellular location is the nucleus speckle. It is found in the cytoplasm. The protein localises to the cytosol. The catalysed reaction is S-ubiquitinyl-[E2 ubiquitin-conjugating enzyme]-L-cysteine + [acceptor protein]-L-lysine = [E2 ubiquitin-conjugating enzyme]-L-cysteine + N(6)-ubiquitinyl-[acceptor protein]-L-lysine.. It functions in the pathway protein modification; protein ubiquitination. Functionally, E3 ubiquitin-protein ligase that regulates several biological processes through the ubiquitin-mediated proteasomal degradation of various target proteins. Ubiquitinates the caspases CASP8 and CASP10, promoting their proteasomal degradation, to negatively regulate cell death downstream of death domain receptors in the extrinsic pathway of apoptosis. May mediate 'Lys-48'-linked polyubiquitination of RIPK1 and its subsequent proteasomal degradation thereby indirectly regulating the tumor necrosis factor-mediated signaling pathway. Negatively regulates p53/TP53 through its direct ubiquitination and targeting to proteasomal degradation. Indirectly, may also negatively regulate p53/TP53 through ubiquitination and degradation of SFN. Mediates PPARGC1A proteasomal degradation probably through ubiquitination thereby indirectly regulating the metabolism of brown fat cells. Possibly involved in innate immunity, through 'Lys-48'-linked polyubiquitination of NOD1 and its subsequent proteasomal degradation. In Rattus norvegicus (Rat), this protein is E3 ubiquitin-protein ligase RNF34.